Reading from the N-terminus, the 319-residue chain is L-tryptophan isonitrile synthase AmbI1 (319 aa).

The protein belongs to the isocyanide synthase family.

The catalysed reaction is D-ribulose 5-phosphate + L-tryptophan = (2S)-3-(1H-indol-3-yl)-2-isocyanopropanoate + hydroxyacetone + formaldehyde + phosphate + H2O + H(+). Functionally, involved in the biosynthesis of ambiguines, a family of hapalindole-type alkaloids. Responsible for the synthesis of the isonitrile group on tryptophan using ribulose 5-phosphate as the source of the carbon atom. This chain is L-tryptophan isonitrile synthase AmbI1, found in Fischerella ambigua (strain UTEX 1903).